The chain runs to 244 residues: 1-(5-phosphoribosyl)-5-[(5-phosphoribosylamino)methylideneamino] imidazole-4-carboxamide isomerase (244 aa).

Asp-10 functions as the Proton acceptor in the catalytic mechanism. The Proton donor role is filled by Asp-132.

This sequence belongs to the HisA/HisF family.

Its subcellular location is the cytoplasm. The enzyme catalyses 1-(5-phospho-beta-D-ribosyl)-5-[(5-phospho-beta-D-ribosylamino)methylideneamino]imidazole-4-carboxamide = 5-[(5-phospho-1-deoxy-D-ribulos-1-ylimino)methylamino]-1-(5-phospho-beta-D-ribosyl)imidazole-4-carboxamide. It functions in the pathway amino-acid biosynthesis; L-histidine biosynthesis; L-histidine from 5-phospho-alpha-D-ribose 1-diphosphate: step 4/9. This Stenotrophomonas maltophilia (strain K279a) protein is 1-(5-phosphoribosyl)-5-[(5-phosphoribosylamino)methylideneamino] imidazole-4-carboxamide isomerase.